Here is a 104-residue protein sequence, read N- to C-terminus: Small ribosomal subunit protein uS10 (104 aa).

The protein belongs to the universal ribosomal protein uS10 family. In terms of assembly, part of the 30S ribosomal subunit.

Involved in the binding of tRNA to the ribosomes. The chain is Small ribosomal subunit protein uS10 from Buchnera aphidicola subsp. Baizongia pistaciae (strain Bp).